A 313-amino-acid polypeptide reads, in one-letter code: Protein-methionine-sulfoxide reductase catalytic subunit MsrP (313 aa).

The segment at residues 1–46 (MPSYRAPKIAAAEITPERFFLDRRTFIAAAAGSLALSVPKPSRAAA) is a signal peptide (tat-type signal). Residues Asn70, 73–74 (YE), Cys127, Thr162, Asn212, Arg217, and 228–230 (GIK) each bind Mo-molybdopterin.

This sequence belongs to the MsrP family. Heterodimer of a catalytic subunit (MsrP) and a heme-binding subunit (MsrQ). Mo-molybdopterin serves as cofactor. Predicted to be exported by the Tat system. The position of the signal peptide cleavage has not been experimentally proven.

Its subcellular location is the periplasm. The catalysed reaction is L-methionyl-[protein] + a quinone + H2O = L-methionyl-(S)-S-oxide-[protein] + a quinol. The enzyme catalyses L-methionyl-[protein] + a quinone + H2O = L-methionyl-(R)-S-oxide-[protein] + a quinol. Part of the MsrPQ system that repairs oxidized periplasmic proteins containing methionine sulfoxide residues (Met-O), using respiratory chain electrons. Thus protects these proteins from oxidative-stress damage caused by reactive species of oxygen and chlorine generated by the host defense mechanisms. MsrPQ is essential for the maintenance of envelope integrity under bleach stress, rescuing a wide series of structurally unrelated periplasmic proteins from methionine oxidation. The catalytic subunit MsrP is non-stereospecific, being able to reduce both (R-) and (S-) diastereoisomers of methionine sulfoxide. The protein is Protein-methionine-sulfoxide reductase catalytic subunit MsrP of Rhizobium meliloti (strain 1021) (Ensifer meliloti).